The following is a 632-amino-acid chain: Probable potassium transport system protein Kup 1 (632 aa).

12 consecutive transmembrane segments (helical) span residues 17 to 37 (LFYL…TSPL), 60 to 80 (LISL…VLFL), 106 to 126 (TALL…DAMI), 144 to 164 (PSLA…LFVV), 175 to 195 (FFGP…ISHI), 210 to 230 (AVSF…AVFL), 254 to 274 (WFLL…ALVL), 292 to 312 (ALLP…QAVI), 344 to 364 (IFLP…VLSF), 370 to 390 (LATA…IMAF), 401 to 421 (LPVA…FLGA), and 426 to 446 (IHDG…VMWT).

The protein belongs to the HAK/KUP transporter (TC 2.A.72) family.

It localises to the cell inner membrane. The catalysed reaction is K(+)(in) + H(+)(in) = K(+)(out) + H(+)(out). In terms of biological role, transport of potassium into the cell. Likely operates as a K(+):H(+) symporter. In Rhizobium etli (strain ATCC 51251 / DSM 11541 / JCM 21823 / NBRC 15573 / CFN 42), this protein is Probable potassium transport system protein Kup 1.